Consider the following 472-residue polypeptide: MKLLNKIKNENAIEFQVLIEKSEWEKKHNEAFEKVAKKTASKLKIPGFRPGNVPVEEAKKHVNEIEVFETTTNDLVPQALTFLEQDESFTSDNSETVDTPSIDILDFKDGELTLKIAYDLYPVATIDSYNDLVLTPIVNEAFDHEVNAEIEHALSSKSQRRVKDENELIEKGDEVRFDFKGMIDNVPFQGGSAKDHLLTIGSNQFIPGFEDQMIGLKVGEQKNLEVKFPDDYHATDLAGRSAVFEVLIKEITSVKPQELNDEFAKSFNLPNVNTVQELKDYIHNQIVLAKQERNSERAWLEIAQQLLAKAKVTPIPQSLIDREVSTLKQQVISQLSQYKIDLKQYLEFSKKSESQFQEDLVKQAKETIALALLVDDIAENQKIVVSDDEVKERIAEMAKLYQGEEEAIIERLSQNPDAVKEFLLHKKVVNYLIDLNKNNQPKDTASTLSKQEDKPKVAKAKTSNTKKVASKK.

Positions 172–257 constitute a PPIase FKBP-type domain; it reads GDEVRFDFKG…IKEITSVKPQ (86 aa). 2 stretches are compositionally biased toward polar residues: residues 439-449 and 461-472; these read NQPKDTASTLS and KTSNTKKVASKK. The tract at residues 439 to 472 is disordered; it reads NQPKDTASTLSKQEDKPKVAKAKTSNTKKVASKK.

It belongs to the FKBP-type PPIase family. Tig subfamily.

Its subcellular location is the cytoplasm. The catalysed reaction is [protein]-peptidylproline (omega=180) = [protein]-peptidylproline (omega=0). Its function is as follows. Involved in protein export. Acts as a chaperone by maintaining the newly synthesized protein in an open conformation. Functions as a peptidyl-prolyl cis-trans isomerase. This chain is Trigger factor, found in Ureaplasma urealyticum serovar 10 (strain ATCC 33699 / Western).